Reading from the N-terminus, the 244-residue chain is tRNA (guanine-N(1)-)-methyltransferase (244 aa).

S-adenosyl-L-methionine is bound by residues Gly-113 and 133 to 138; that span reads IGDFVL.

It belongs to the RNA methyltransferase TrmD family. As to quaternary structure, homodimer.

The protein resides in the cytoplasm. It carries out the reaction guanosine(37) in tRNA + S-adenosyl-L-methionine = N(1)-methylguanosine(37) in tRNA + S-adenosyl-L-homocysteine + H(+). In terms of biological role, specifically methylates guanosine-37 in various tRNAs. The sequence is that of tRNA (guanine-N(1)-)-methyltransferase from Bacillus pumilus (strain SAFR-032).